The chain runs to 299 residues: Pyridoxal 5'-phosphate synthase subunit PdxS (299 aa).

Residue aspartate 24 coordinates D-ribose 5-phosphate. The active-site Schiff-base intermediate with D-ribose 5-phosphate is the lysine 81. Residue glycine 153 participates in D-ribose 5-phosphate binding. Arginine 165 contributes to the D-glyceraldehyde 3-phosphate binding site. D-ribose 5-phosphate is bound by residues glycine 219 and 240 to 241; that span reads GS.

This sequence belongs to the PdxS/SNZ family. In the presence of PdxT, forms a dodecamer of heterodimers.

The enzyme catalyses aldehydo-D-ribose 5-phosphate + D-glyceraldehyde 3-phosphate + L-glutamine = pyridoxal 5'-phosphate + L-glutamate + phosphate + 3 H2O + H(+). It functions in the pathway cofactor biosynthesis; pyridoxal 5'-phosphate biosynthesis. Functionally, catalyzes the formation of pyridoxal 5'-phosphate from ribose 5-phosphate (RBP), glyceraldehyde 3-phosphate (G3P) and ammonia. The ammonia is provided by the PdxT subunit. Can also use ribulose 5-phosphate and dihydroxyacetone phosphate as substrates, resulting from enzyme-catalyzed isomerization of RBP and G3P, respectively. The polypeptide is Pyridoxal 5'-phosphate synthase subunit PdxS (Methanococcus aeolicus (strain ATCC BAA-1280 / DSM 17508 / OCM 812 / Nankai-3)).